We begin with the raw amino-acid sequence, 372 residues long: Aminomethyltransferase (372 aa).

It belongs to the GcvT family. In terms of assembly, the glycine cleavage system is composed of four proteins: P, T, L and H.

The catalysed reaction is N(6)-[(R)-S(8)-aminomethyldihydrolipoyl]-L-lysyl-[protein] + (6S)-5,6,7,8-tetrahydrofolate = N(6)-[(R)-dihydrolipoyl]-L-lysyl-[protein] + (6R)-5,10-methylene-5,6,7,8-tetrahydrofolate + NH4(+). In terms of biological role, the glycine cleavage system catalyzes the degradation of glycine. This chain is Aminomethyltransferase, found in Prochlorococcus marinus (strain NATL1A).